The sequence spans 228 residues: PKHD-type hydroxylase XC_1340 (228 aa).

Positions 78–180 (RIYPPLFNRY…RVASFFWIQS (103 aa)) constitute a Fe2OG dioxygenase domain. Residues His-96, Asp-98, and His-161 each contribute to the Fe cation site. A 2-oxoglutarate-binding site is contributed by Arg-171.

The cofactor is Fe(2+). L-ascorbate serves as cofactor.

This is PKHD-type hydroxylase XC_1340 from Xanthomonas campestris pv. campestris (strain 8004).